The chain runs to 119 residues: Holo-[acyl-carrier-protein] synthase (119 aa).

Mg(2+)-binding residues include aspartate 8 and glutamate 60.

Belongs to the P-Pant transferase superfamily. AcpS family. Mg(2+) serves as cofactor.

The protein localises to the cytoplasm. The enzyme catalyses apo-[ACP] + CoA = holo-[ACP] + adenosine 3',5'-bisphosphate + H(+). Its function is as follows. Transfers the 4'-phosphopantetheine moiety from coenzyme A to a Ser of acyl-carrier-protein. In Mycoplasma pneumoniae (strain ATCC 29342 / M129 / Subtype 1) (Mycoplasmoides pneumoniae), this protein is Holo-[acyl-carrier-protein] synthase.